We begin with the raw amino-acid sequence, 107 residues long: Iron-sulfur cluster assembly protein CyaY (107 aa).

The protein belongs to the frataxin family.

Its function is as follows. Involved in iron-sulfur (Fe-S) cluster assembly. May act as a regulator of Fe-S biogenesis. In Neisseria meningitidis serogroup C / serotype 2a (strain ATCC 700532 / DSM 15464 / FAM18), this protein is Iron-sulfur cluster assembly protein CyaY.